A 76-amino-acid chain; its full sequence is Brevinin-2ISb (76 aa).

The signal sequence occupies residues 1 to 22; sequence MFTMKKSLLVLFFLGTISLSLC. The propeptide at 23–41 is removed in mature form; sequence QEERNADEEDGGEATEEEV. An intrachain disulfide couples Cys-70 to Cys-76.

As to expression, expressed by the skin glands.

It is found in the secreted. Has antimicrobial activity against Gram-negative bacterium E.coli ATCC 8739 (MIC=12.5 ug), against Gram positive bacteria S.aureus ATCC 6538 (MIC=6.3 ug) and B.subtilis ATCC 6633 (MIC=25 ug). Has no activity against methicillin-resistant S.aureus ATCC 43300 (MIC= ug) and fungus C.albicans ATCC 90028. In Odorrana ishikawae (Ishikawa's frog), this protein is Brevinin-2ISb.